Consider the following 219-residue polypeptide: Octanoyltransferase (219 aa).

The BPL/LPL catalytic domain occupies 32–207; it reads ENSQDEIWIV…TLSQELGLDK (176 aa). Residues 71 to 78, 138 to 140, and 151 to 153 each bind substrate; these read RGGQVTYH, SLG, and GLA. C169 serves as the catalytic Acyl-thioester intermediate.

The protein belongs to the LipB family.

The protein localises to the cytoplasm. The catalysed reaction is octanoyl-[ACP] + L-lysyl-[protein] = N(6)-octanoyl-L-lysyl-[protein] + holo-[ACP] + H(+). Its pathway is protein modification; protein lipoylation via endogenous pathway; protein N(6)-(lipoyl)lysine from octanoyl-[acyl-carrier-protein]: step 1/2. Functionally, catalyzes the transfer of endogenously produced octanoic acid from octanoyl-acyl-carrier-protein onto the lipoyl domains of lipoate-dependent enzymes. Lipoyl-ACP can also act as a substrate although octanoyl-ACP is likely to be the physiological substrate. In Shewanella halifaxensis (strain HAW-EB4), this protein is Octanoyltransferase.